Reading from the N-terminus, the 387-residue chain is Short-chain dehydrogenase/reductase family 42E member 1 (387 aa).

Residue Y149 is the Proton acceptor of the active site. Residue K153 coordinates NAD(+). The next 2 membrane-spanning stretches (helical) occupy residues 279–299 (LPIS…FVVG) and 365–385 (ILDV…LPVV).

This sequence belongs to the 3-beta-HSD family.

It localises to the membrane. The protein is Short-chain dehydrogenase/reductase family 42E member 1 (sdr42e1) of Danio rerio (Zebrafish).